Consider the following 233-residue polypeptide: Large ribosomal subunit protein uL1 (233 aa).

The protein belongs to the universal ribosomal protein uL1 family. In terms of assembly, part of the 50S ribosomal subunit.

Its function is as follows. Binds directly to 23S rRNA. The L1 stalk is quite mobile in the ribosome, and is involved in E site tRNA release. In terms of biological role, protein L1 is also a translational repressor protein, it controls the translation of the L11 operon by binding to its mRNA. The sequence is that of Large ribosomal subunit protein uL1 from Finegoldia magna (strain ATCC 29328 / DSM 20472 / WAL 2508) (Peptostreptococcus magnus).